Reading from the N-terminus, the 529-residue chain is Bifunctional purine biosynthesis protein PurH (529 aa).

The MGS-like domain maps to 1 to 148 (MQQRRPVRRA…KNHKDVAIVV (148 aa)).

Belongs to the PurH family.

The enzyme catalyses (6R)-10-formyltetrahydrofolate + 5-amino-1-(5-phospho-beta-D-ribosyl)imidazole-4-carboxamide = 5-formamido-1-(5-phospho-D-ribosyl)imidazole-4-carboxamide + (6S)-5,6,7,8-tetrahydrofolate. It catalyses the reaction IMP + H2O = 5-formamido-1-(5-phospho-D-ribosyl)imidazole-4-carboxamide. It functions in the pathway purine metabolism; IMP biosynthesis via de novo pathway; 5-formamido-1-(5-phospho-D-ribosyl)imidazole-4-carboxamide from 5-amino-1-(5-phospho-D-ribosyl)imidazole-4-carboxamide (10-formyl THF route): step 1/1. Its pathway is purine metabolism; IMP biosynthesis via de novo pathway; IMP from 5-formamido-1-(5-phospho-D-ribosyl)imidazole-4-carboxamide: step 1/1. This is Bifunctional purine biosynthesis protein PurH from Citrobacter koseri (strain ATCC BAA-895 / CDC 4225-83 / SGSC4696).